Consider the following 2006-residue polypeptide: Sodium channel protein type 2 subunit alpha (2006 aa).

Serine 4 bears the Phosphoserine mark. Residues 28–61 (RIAEEKAKRPKQERKDEDDENGPKPNSDLEAGKS) form a disordered region. Residue lysine 38 forms a Glycyl lysine isopeptide (Lys-Gly) (interchain with G-Cter in SUMO1) linkage. The I repeat unit spans residues 111–456 (ILTPFNPIRK…QQMLEQLKKQ (346 aa)). Residues 130 to 148 (LFNVLIMCTILTNCVFMTM) form a helical membrane-spanning segment. The helical transmembrane segment at 156–176 (KNVEYTFTGIYTFESLIKILA) threads the bilayer. A helical transmembrane segment spans residues 191 to 208 (WNWLDFTVITFAYVTEFV). A helical membrane pass occupies residues 215-231 (ALRTFRVLRALKTISVI). A helical transmembrane segment spans residues 251–270 (VMILTVFCLSVFALIGLQLF). An intrachain disulfide couples cysteine 278 to cysteine 338. Residues asparagine 285, asparagine 291, asparagine 297, asparagine 303, asparagine 308, and asparagine 340 are each glycosylated (N-linked (GlcNAc...) asparagine). Positions 370–394 (FSWAFLSLFRLMTQDFWENLYQLTL) form an intramembrane region, pore-forming. Residues 402–422 (MIFFVLVIFLGSFYLINLILA) form a helical membrane-spanning segment. 17 positions are modified to phosphoserine: serine 468, serine 471, serine 484, serine 526, serine 528, serine 531, serine 553, serine 554, serine 558, serine 573, serine 576, serine 589, serine 610, serine 623, serine 687, serine 688, and serine 722. Residues 494 to 529 (SSKSEKELKNRRKKKKQKEQAGEEEKEDAVRKSASE) are disordered. Residues 511–529 (KEQAGEEEKEDAVRKSASE) are compositionally biased toward basic and acidic residues. Positions 589-635 (SENDFADDEHSTFEDNDSRRDSLFVPHRHGERRPSNVSQASRASRGI) are disordered. Over residues 596–610 (DEHSTFEDNDSRRDS) the composition is skewed to basic and acidic residues. The stretch at 742–1014 (CCKPWLKVKH…QIAVGRMQKG (273 aa)) is one II repeat. The chain crosses the membrane as a helical span at residues 761–779 (FVDLAITICIVLNTLFMAM). The helical transmembrane segment at 791-810 (VLSVGNLVFTGIFTAEMFLK) threads the bilayer. Residues 825–844 (NIFDGFIVSLSLMELGLANV) form a helical membrane-spanning segment. The helical transmembrane segment at 847–864 (LSVLRSFRLLRVFKLAKS) threads the bilayer. A helical transmembrane segment spans residues 881 to 899 (ALGNLTLVLAIIVFIFAVV). Cysteine 913 and cysteine 919 are disulfide-bonded. A binds SCN2B region spans residues 918 to 919 (DC). An intramembrane region (pore-forming) is located at residues 929-949 (FFHSFLIVFRVLCGEWIETMW). Cysteine 951 and cysteine 960 are joined by a disulfide. A helical transmembrane segment spans residues 963-983 (VFMMVMVIGNLVVLNLFLALL). The segment at 1121–1167 (EEFSSESDMEESKEKLNATSSSEGSTVDIGAPAEGEQPEAEPEESLE) is disordered. Over residues 1156–1167 (EQPEAEPEESLE) the composition is skewed to acidic residues. An III repeat occupies 1191 to 1505 (KGKLWWNLRK…KKYYNAMKKL (315 aa)). A helical membrane pass occupies residues 1211–1228 (FETFIVFMILLSSGALAF). A helical membrane pass occupies residues 1242–1260 (MLEYADKVFTYIFILEMLL). Residues 1275–1293 (WCWLDFLIVDVSLVSLTAN) traverse the membrane as a helical segment. Residues 1302-1320 (AIKSLRTLRALRPLRALSR) form a helical membrane-spanning segment. A helical membrane pass occupies residues 1338 to 1357 (IMNVLLVCLIFWLIFSIMGV). A disulfide bridge connects residues cysteine 1367 and cysteine 1387. The pore-forming intramembrane region spans 1410 to 1431 (GLGYLSLLQVATFKGWMDIMYA). Residues 1449–1470 (YMYLYFVIFIIFGSFFTLNLFI) traverse the membrane as a helical segment. Serine 1507 is subject to Phosphoserine. The IV repeat unit spans residues 1514-1812 (IPRPANKFQG…WEKFDPDATQ (299 aa)). Residues 1534 to 1551 (FDISIMILICLNMVTMMV) form a helical membrane-spanning segment. Residues 1563-1581 (ILYWINLVFIVLFTGECVL) form a helical membrane-spanning segment. The helical transmembrane segment at 1594–1611 (GWNIFDFVVVILSIVGMF) threads the bilayer. A helical transmembrane segment spans residues 1625–1641 (LFRVIRLARIGRILRLI). Residues 1661–1678 (LFNIGLLLFLVMFIYAIF) form a helical membrane-spanning segment. The segment at residues 1701–1723 (FGNSMICLFQITTSAGWDGLLAP) is an intramembrane region (pore-forming). A disulfide bond links cysteine 1732 and cysteine 1747. The helical transmembrane segment at 1754-1776 (IFFFVSYIIISFLVVVNMYIAVI) threads the bilayer. Positions 1906–1935 (EEVSAIVIQRAYRRYLLKQKVKKVSSIYKK) constitute an IQ domain. Position 1931 is a phosphoserine (serine 1931). Residues 1934–1965 (KKDKGKEDEGTPIKEDIITDKLNENSTPEKTD) show a composition bias toward basic and acidic residues. The tract at residues 1934-2006 (KKDKGKEDEG…KGKDIRESKK (73 aa)) is disordered. Phosphothreonine is present on residues threonine 1944, threonine 1964, and threonine 1967. Serine 1972 carries the phosphoserine modification. The span at 1980–2006 (TKPEKEKFEKDKSEKEDKGKDIRESKK) shows a compositional bias: basic and acidic residues.

It belongs to the sodium channel (TC 1.A.1.10) family. Nav1.2/SCN2A subfamily. Heterooligomer of a large alpha subunit and a smaller beta subunit. Heterooligomer with SCN2B or SCN4B; disulfide-linked. Interacts with NEDD4L. Interacts with CALM. Interacts with TMEM233. In terms of processing, sumoylated at Lys-38. Sumoylation is induced by hypoxia, increases voltage-gated sodium current and mediates the early response to acute hypoxia in neurons. Sumoylated SCN2A is located at the cell membrane. In terms of tissue distribution, expressed in brain (at protein level). Detected in hippocampus, cortex and brain stem.

The protein resides in the cell membrane. It catalyses the reaction Na(+)(in) = Na(+)(out). In terms of biological role, mediates the voltage-dependent sodium ion permeability of excitable membranes. Assuming opened or closed conformations in response to the voltage difference across the membrane, the protein forms a sodium-selective channel through which Na(+) ions may pass in accordance with their electrochemical gradient. Implicated in the regulation of hippocampal replay occurring within sharp wave ripples (SPW-R) important for memory. This Mus musculus (Mouse) protein is Sodium channel protein type 2 subunit alpha.